Here is a 196-residue protein sequence, read N- to C-terminus: Small ribosomal subunit protein uS4c (196 aa).

The disordered stretch occupies residues 22 to 42; the sequence is TRKTPKSGSNPKKKFHSGKKE. In terms of domain architecture, S4 RNA-binding spans 89-169; sequence MRLDNILFRL…LPKHLTIDTL (81 aa).

It belongs to the universal ribosomal protein uS4 family. Part of the 30S ribosomal subunit. Contacts protein S5. The interaction surface between S4 and S5 is involved in control of translational fidelity.

The protein localises to the plastid. The protein resides in the chloroplast. Its function is as follows. One of the primary rRNA binding proteins, it binds directly to 16S rRNA where it nucleates assembly of the body of the 30S subunit. With S5 and S12 plays an important role in translational accuracy. The sequence is that of Small ribosomal subunit protein uS4c (rps4) from Melica altissima (Siberian melic grass).